The sequence spans 372 residues: Alanine dehydrogenase 1 (372 aa).

His-94 is a catalytic residue. NAD(+) is bound at residue 170–200 (TYVIFGGGVAATNAANVALGLNAKVIIIELN).

This sequence belongs to the AlaDH/PNT family.

The enzyme catalyses L-alanine + NAD(+) + H2O = pyruvate + NH4(+) + NADH + H(+). It participates in amino-acid degradation; L-alanine degradation via dehydrogenase pathway; NH(3) and pyruvate from L-alanine: step 1/1. Functionally, may play a role in cell wall synthesis as L-alanine is an important constituent of the peptidoglycan layer. The polypeptide is Alanine dehydrogenase 1 (ald1) (Staphylococcus aureus (strain MSSA476)).